We begin with the raw amino-acid sequence, 688 residues long: Methionine--tRNA ligase (688 aa).

Residues 13–23 (PYANGNFHIGH) carry the 'HIGH' region motif. The Zn(2+) site is built by cysteine 144, cysteine 147, cysteine 157, and cysteine 160. A 'KMSKS' region motif is present at residues 342–346 (KMSKS). Lysine 345 lines the ATP pocket. Residues 582–688 (DFAKVDLRIA…PGAQPGMRIH (107 aa)) form the tRNA-binding domain.

This sequence belongs to the class-I aminoacyl-tRNA synthetase family. MetG type 1 subfamily. In terms of assembly, homodimer. Zn(2+) is required as a cofactor.

It localises to the cytoplasm. It carries out the reaction tRNA(Met) + L-methionine + ATP = L-methionyl-tRNA(Met) + AMP + diphosphate. Its function is as follows. Is required not only for elongation of protein synthesis but also for the initiation of all mRNA translation through initiator tRNA(fMet) aminoacylation. This is Methionine--tRNA ligase from Acidovorax ebreus (strain TPSY) (Diaphorobacter sp. (strain TPSY)).